We begin with the raw amino-acid sequence, 442 residues long: Septin-8 (442 aa).

Residues 1–16 (MAATDLERISNAEPEP) are compositionally biased toward basic and acidic residues. A disordered region spans residues 1-21 (MAATDLERISNAEPEPRSLSL). An N-acetylalanine modification is found at alanine 2. At serine 10 the chain carries Phosphoserine. The region spanning 41 to 307 (QGFSFNILCV…ELYRRCKLEE (267 aa)) is the Septin-type G domain. The G1 motif stretch occupies residues 51 to 58 (GETGIGKS). GTP contacts are provided by residues 51–58 (GETGIGKS), glycine 106, 187–195 (KADTISKSE), glycine 241, and arginine 256. The G3 motif stretch occupies residues 103–106 (DAVG). A G4 motif region spans residues 186 to 189 (AKAD). The stretch at 322–407 (LQETYEAKRK…FNCRKAAMEA (86 aa)) forms a coiled coil. Positions 411–420 (QALHATSQQP) are enriched in polar residues. The tract at residues 411–442 (QALHATSQQPLRKDKDKKKVGGWSSIYSVTIP) is disordered.

Belongs to the TRAFAC class TrmE-Era-EngA-EngB-Septin-like GTPase superfamily. Septin GTPase family. Septins polymerize into heterooligomeric protein complexes that form filaments, and can associate with cellular membranes, actin filaments and microtubules. GTPase activity is required for filament formation. Interacts with SEPTIN7. Interacts with CDK14, SEPTIN4 and SEPTIN5. Interacts with VAMP2; the interaction inhibits interaction of VAMP2 with SYP. Interacts with STX1A. As to expression, expressed in cerebrum, hippocampus and cerebellum (at protein level). Expressed in heart (at protein level).

It is found in the cytoplasm. Its subcellular location is the cytoskeleton. The protein resides in the synapse. The protein localises to the cell projection. It localises to the axon. It is found in the cytoplasmic vesicle. Its subcellular location is the secretory vesicle. The protein resides in the synaptic vesicle membrane. The protein localises to the presynapse. Its function is as follows. Filament-forming cytoskeletal GTPase. May play a role in platelet secretion. Seems to participate in the process of SNARE complex formation in synaptic vesicles. This chain is Septin-8, found in Rattus norvegicus (Rat).